A 665-amino-acid chain; its full sequence is Fermitin family homolog 3 (665 aa).

Position 11 is a phosphotyrosine (Tyr-11). In terms of domain architecture, FERM spans 229–556 (WLDSSRCLMQ…SLPDFGISYV (328 aa)). Residues 354–453 (DHLRIFRPRK…WMAGCRLASK (100 aa)) form the PH domain. Tyr-502 carries the phosphotyrosine modification. Thr-589 carries the phosphothreonine modification.

The protein belongs to the kindlin family. In terms of assembly, interacts with ITGB1, ITGB2 and ITGB3 (via cytoplasmic tails).

Its subcellular location is the cell projection. It is found in the podosome. Its function is as follows. Plays a central role in cell adhesion in hematopoietic cells. Acts by activating the integrin beta-1-3 (ITGB1, ITGB2 and ITGB3). Required for integrin-mediated platelet adhesion and leukocyte adhesion to endothelial cells. Required for activation of integrin beta-2 (ITGB2) in polymorphonuclear granulocytes (PMNs). The chain is Fermitin family homolog 3 (FERMT3) from Bos taurus (Bovine).